We begin with the raw amino-acid sequence, 115 residues long: Nucleoid-associated protein Ava_2322 (115 aa).

This sequence belongs to the YbaB/EbfC family. Homodimer.

Its subcellular location is the cytoplasm. The protein localises to the nucleoid. Binds to DNA and alters its conformation. May be involved in regulation of gene expression, nucleoid organization and DNA protection. This Trichormus variabilis (strain ATCC 29413 / PCC 7937) (Anabaena variabilis) protein is Nucleoid-associated protein Ava_2322.